A 306-amino-acid chain; its full sequence is Ribosomal RNA small subunit methyltransferase A (306 aa).

6 residues coordinate S-adenosyl-L-methionine: Asn37, Val39, Gly64, Glu85, Asp115, and Asn134.

Belongs to the class I-like SAM-binding methyltransferase superfamily. rRNA adenine N(6)-methyltransferase family. RsmA subfamily.

It localises to the cytoplasm. It catalyses the reaction adenosine(1518)/adenosine(1519) in 16S rRNA + 4 S-adenosyl-L-methionine = N(6)-dimethyladenosine(1518)/N(6)-dimethyladenosine(1519) in 16S rRNA + 4 S-adenosyl-L-homocysteine + 4 H(+). Its function is as follows. Specifically dimethylates two adjacent adenosines (A1518 and A1519) in the loop of a conserved hairpin near the 3'-end of 16S rRNA in the 30S particle. May play a critical role in biogenesis of 30S subunits. In Mycobacterium leprae (strain Br4923), this protein is Ribosomal RNA small subunit methyltransferase A.